The sequence spans 294 residues: tRNA pseudouridine synthase B (294 aa).

Aspartate 39 functions as the Nucleophile in the catalytic mechanism.

Belongs to the pseudouridine synthase TruB family. Type 1 subfamily.

The catalysed reaction is uridine(55) in tRNA = pseudouridine(55) in tRNA. Its function is as follows. Responsible for synthesis of pseudouridine from uracil-55 in the psi GC loop of transfer RNAs. This is tRNA pseudouridine synthase B from Streptococcus agalactiae serotype Ia (strain ATCC 27591 / A909 / CDC SS700).